The following is a 136-amino-acid chain: Histone H3 (136 aa).

The tract at residues 1–43 (MARTKQTARKSTGGKAPRKQLATKAARKSAPASGGVKKPHRYR) is disordered. N6,N6,N6-trimethyllysine; alternate occurs at positions 5 and 10. An N6,N6-dimethyllysine; alternate mark is found at K5 and K10. N6-acetyllysine; alternate is present on residues K5 and K10. Position 5 is an N6-methyllysine; alternate (K5). At S11 the chain carries Phosphoserine. An N6-acetyllysine mark is found at K15 and K24. K28 is subject to N6,N6,N6-trimethyllysine; alternate. N6,N6-dimethyllysine; alternate is present on K28. Residue K28 is modified to N6-methyllysine; alternate. S29 carries the phosphoserine modification. K37 carries the N6,N6,N6-trimethyllysine; alternate modification. An N6,N6-dimethyllysine; alternate modification is found at K37. K37 is subject to N6-methyllysine; alternate. N6-methyllysine is present on K80.

It belongs to the histone H3 family. As to quaternary structure, the nucleosome is a histone octamer containing two molecules each of H2A, H2B, H3 and H4 assembled in one H3-H4 heterotetramer and two H2A-H2B heterodimers. The octamer wraps approximately 147 bp of DNA. Interacts (via N-terminal tail mono-acetylated on Lys-15) with swsn-4 (via Bromo domain); the interaction is direct. Phosphorylated at Ser-11 and Ser-29 during M phase. Phosphorylation of Ser-11 requires air-2 but not air-1. Dephosphorylated by gsp-1 and/or gsp-2 during chromosome segregation. In terms of processing, acetylation is generally linked to gene activation. Post-translationally, methylation at Lys-5 is linked to gene activation and is absent from male inactive X chromosome chromatin. Methylation at Lys-10 is linked to gene repression and is enriched in male inactive X chromosome chromatin. Methylation at Lys-37 occurs on the entire length of autosomes during meiotic prophase. Trimethylation at Lys-10 and Lys-37 is specifically antagonized by jmjd-2. Dimethylation and trimethylation at Lys-28 occurs in all nuclei. The mes-2-mes-3-mes-6 complex may be responsible for Lys-28 methylation in most of the germline and in the early embryo.

The protein resides in the nucleus. Its subcellular location is the chromosome. Core component of nucleosome. Nucleosomes wrap and compact DNA into chromatin, limiting DNA accessibility to the cellular machineries which require DNA as a template. Histones thereby play a central role in transcription regulation, DNA repair, DNA replication and chromosomal stability. DNA accessibility is regulated via a complex set of post-translational modifications of histones, also called histone code, and nucleosome remodeling. This Caenorhabditis elegans protein is Histone H3 (his-2).